The following is a 167-amino-acid chain: 2-C-methyl-D-erythritol 2,4-cyclodiphosphate synthase (167 aa).

Residues aspartate 11 and histidine 13 each contribute to the a divalent metal cation site. Residues 11-13 and 37-38 contribute to the 4-CDP-2-C-methyl-D-erythritol 2-phosphate site; these read DIH and HS. Histidine 45 contributes to the a divalent metal cation binding site. 4-CDP-2-C-methyl-D-erythritol 2-phosphate-binding positions include 59–61, 64–68, 103–109, and arginine 145; these read DIG, FSDTD, and AQAPKMA.

This sequence belongs to the IspF family. In terms of assembly, homotrimer. The cofactor is a divalent metal cation.

It catalyses the reaction 4-CDP-2-C-methyl-D-erythritol 2-phosphate = 2-C-methyl-D-erythritol 2,4-cyclic diphosphate + CMP. It functions in the pathway isoprenoid biosynthesis; isopentenyl diphosphate biosynthesis via DXP pathway; isopentenyl diphosphate from 1-deoxy-D-xylulose 5-phosphate: step 4/6. In terms of biological role, involved in the biosynthesis of isopentenyl diphosphate (IPP) and dimethylallyl diphosphate (DMAPP), two major building blocks of isoprenoid compounds. Catalyzes the conversion of 4-diphosphocytidyl-2-C-methyl-D-erythritol 2-phosphate (CDP-ME2P) to 2-C-methyl-D-erythritol 2,4-cyclodiphosphate (ME-CPP) with a corresponding release of cytidine 5-monophosphate (CMP). The protein is 2-C-methyl-D-erythritol 2,4-cyclodiphosphate synthase of Nitrosomonas eutropha (strain DSM 101675 / C91 / Nm57).